We begin with the raw amino-acid sequence, 81 residues long: ATP synthase subunit C, cyanelle (81 aa).

Helical transmembrane passes span 7–27 (AASV…PGIG) and 57–77 (LAFM…LLFA).

The protein belongs to the ATPase C chain family. F-type ATPases have 2 components, F(1) - the catalytic core - and F(0) - the membrane proton channel. F(1) has five subunits: alpha(3), beta(3), gamma(1), delta(1), epsilon(1). F(0) has four main subunits: a(1), b(1), b'(1) and c(10-14). The alpha and beta chains form an alternating ring which encloses part of the gamma chain. F(1) is attached to F(0) by a central stalk formed by the gamma and epsilon chains, while a peripheral stalk is formed by the delta, b and b' chains.

The protein localises to the plastid. Its subcellular location is the cyanelle thylakoid membrane. Functionally, f(1)F(0) ATP synthase produces ATP from ADP in the presence of a proton or sodium gradient. F-type ATPases consist of two structural domains, F(1) containing the extramembraneous catalytic core and F(0) containing the membrane proton channel, linked together by a central stalk and a peripheral stalk. During catalysis, ATP synthesis in the catalytic domain of F(1) is coupled via a rotary mechanism of the central stalk subunits to proton translocation. Key component of the F(0) channel; it plays a direct role in translocation across the membrane. A homomeric c-ring of between 10-14 subunits forms the central stalk rotor element with the F(1) delta and epsilon subunits. This is ATP synthase subunit C, cyanelle from Cyanophora paradoxa.